A 182-amino-acid chain; its full sequence is ADP-ribosylation factor-like protein 11 (182 aa).

A lipid anchor (N-myristoyl glycine) is attached at Gly-2. GTP contacts are provided by residues 19 to 26, 63 to 67, and 122 to 125; these read GLDSAGKT, DVGGQ, and NKQE.

The protein belongs to the small GTPase superfamily. Arf family.

May play a role in apoptosis. May act as a tumor suppressor. The chain is ADP-ribosylation factor-like protein 11 (ARL11) from Bos taurus (Bovine).